A 954-amino-acid chain; its full sequence is MIMNMKNIFYCLLPGLLLGACSNKVYEKTGDSVIVKVQHKETGGPRLVRLQVMGDKLIHVSATADSKFADPQSLIVVPQKKQTSFAVVQNGDTITVSTEEVKASVLASTGEVWFTDKNGELILQENKGGGKTFTPIEVEGTKGYTVCQVFESPEDEAFYGLGQHQADEFNYKGKNEELFQYNTKVSVPFVVSNKNYGILLDSYSFCRFGNPNDYSQLNRIFKLYDKTGQEGALTGTYVPKKGETLVRREDSIYFENLKTIENLPKKLPLMGAKVTYEGEIEPAQTGEFKFILYYAGYVKVYLNNEPVVPERWRTAWNPNSYKFAAHLEAGKRVPLKIEWQPDGGQSYCGLRALTPVNPEEQGKQSWWSEMTKQLDYYFMAGENMDDVISGYRSLTGKSPVMPKWAMGFWQSREKYNTQEEMLGALKGFRDRKIPLDNIVLDWNHWPENAWGSHEFDKARFPDPKAMVDSIHAMHARMMISVWPKFYVTTEHFKEFDENGWMYQQSVKDSLKDWVGPGYHYGFYDAYDPDARKLFWKQMYEHYYPLGIDAWWMDASEPNVRDCTDLEYRKALCGPTALGSSTEFFNAYALMNAEAIYDGQRGVDNNKRVFLLTRSGFAGLQRYSTATWSGDIGTRWEDMKAQISAGLNFAMSGIPYWTMDIGGFCVENRYVAGQKQWNATKTENADYKEWRELNTRWYQFGAFVPLYRAHGQYPFREIWEIAPEGHPAYQSVVYYTKLRYNMMPYIYSLAGMTWFDDYTIMRPLVMDFTADAEVNDIGDQFMFGPSFMVSPVYRYGDRSREIYFPQAEGWYDFYSGKFQAGGERKVIEAPYERIPLYVRAGAIIPFGDDIQYTDEKPAEHIRLYIYQGADGEFTLYEDEGVNYNYEQGMYAMIPMKYDEATKTLVIGERQGEFPGMLKERTFTVVTVNKEKAQPFDLNAKGVTVKYNGSEQTLKL.

The signal sequence occupies residues 1–20; the sequence is MIMNMKNIFYCLLPGLLLGA. Residue cysteine 21 is the site of N-palmitoyl cysteine attachment. Cysteine 21 carries S-diacylglycerol cysteine lipidation. Residues 227–366 enclose the PA14 domain; that stretch reads TGQEGALTGT…NPEEQGKQSW (140 aa). Active-site residues include aspartate 553 and glutamate 556. Aspartate 630 acts as the Proton donor in catalysis.

It belongs to the glycosyl hydrolase 31 family.

It localises to the cell inner membrane. It carries out the reaction Hydrolysis of terminal, non-reducing alpha-D-xylose residues with release of alpha-D-xylose.. It participates in glucan metabolism; xyloglucan degradation. Catalyzes the liberation of alpha-xylose from the non-reducing terminal glucose of xyloglucan oligosaccharides in xyloglucan degradation, converting the 'X' to 'G' units. The sequence is that of Alpha-xylosidase BoGH31A from Bacteroides ovatus (strain ATCC 8483 / DSM 1896 / JCM 5824 / BCRC 10623 / CCUG 4943 / NCTC 11153).